The sequence spans 313 residues: Beta-ketoacyl-[acyl-carrier-protein] synthase III (313 aa).

Active-site residues include cysteine 112 and histidine 238. The tract at residues 239 to 243 (QANIR) is ACP-binding. Asparagine 268 is an active-site residue.

Belongs to the thiolase-like superfamily. FabH family. In terms of assembly, homodimer.

The protein localises to the cytoplasm. The enzyme catalyses malonyl-[ACP] + acetyl-CoA + H(+) = 3-oxobutanoyl-[ACP] + CO2 + CoA. Its pathway is lipid metabolism; fatty acid biosynthesis. Its function is as follows. Catalyzes the condensation reaction of fatty acid synthesis by the addition to an acyl acceptor of two carbons from malonyl-ACP. Catalyzes the first condensation reaction which initiates fatty acid synthesis and may therefore play a role in governing the total rate of fatty acid production. Possesses both acetoacetyl-ACP synthase and acetyl transacylase activities. Its substrate specificity determines the biosynthesis of branched-chain and/or straight-chain of fatty acids. This Staphylococcus saprophyticus subsp. saprophyticus (strain ATCC 15305 / DSM 20229 / NCIMB 8711 / NCTC 7292 / S-41) protein is Beta-ketoacyl-[acyl-carrier-protein] synthase III.